Consider the following 243-residue polypeptide: Thaumatin-like protein 1 (243 aa).

Positions 1–22 (MMKTLALYGLTLALFFLSGAHS) are cleaved as a signal peptide. 8 disulfides stabilise this stretch: Cys-31–Cys-242, Cys-79–Cys-88, Cys-93–Cys-100, Cys-148–Cys-231, Cys-153–Cys-214, Cys-161–Cys-177, Cys-181–Cys-190, and Cys-191–Cys-201.

Belongs to the thaumatin family.

It localises to the secreted. The protein localises to the extracellular space. It is found in the apoplast. Its function is as follows. Possesses antifungal activity. This Castanea sativa (Sweet chestnut) protein is Thaumatin-like protein 1 (TL1).